The following is a 1158-amino-acid chain: Serine/threonine/tyrosine-interacting-like protein 2 (1158 aa).

10 disordered regions span residues 1–21 (MATR…DEAN), 280–303 (EERE…GTGS), 315–337 (EEED…QASK), 360–392 (LLSD…VERI), 407–444 (GYRR…ESVS), 492–527 (SRRY…GSEA), 559–582 (KDLG…KNPS), 597–622 (QKKV…LAKK), 873–915 (KVKE…CSSL), and 940–1135 (SGLR…MDDE). A compositionally biased stretch (acidic residues) spans 8–19 (EEEQVVPSEEDE). A Tyrosine-protein phosphatase domain is found at 132 to 280 (NEVDEVWPNV…LRELNEKLME (149 aa)). The span at 322–337 (SHLSGSSLGKATQASK) shows a compositional bias: polar residues. Ser377 bears the Phosphoserine mark. Position 433 is a phosphothreonine (Thr433). The segment covering 435–444 (SESSAWESVS) has biased composition (low complexity). Residues 500–517 (KREEAADRSSEAGSRVRE) are compositionally biased toward basic and acidic residues. Ser509 carries the phosphoserine modification. The span at 600–619 (VGSENKEEVVELSKGEDSAL) shows a compositional bias: basic and acidic residues. Residues 877 to 890 (DEDDGVGDGDEDTD) show a composition bias toward acidic residues. Composition is skewed to polar residues over residues 897–914 (RYSS…TCSS) and 952–966 (SDWS…TRSS). Positions 974 to 983 (KSSSYKFSKS) are enriched in low complexity. The residue at position 985 (Ser985) is a Phosphoserine. Over residues 990–999 (TSSYHEANGN) the composition is skewed to polar residues. Over residues 1000–1012 (SVRSTSRFSSSST) the composition is skewed to low complexity. Phosphoserine is present on Ser1036. 3 stretches are compositionally biased toward basic and acidic residues: residues 1044–1056 (RTPE…ESPE), 1064–1079 (RSRD…KSDF), and 1094–1111 (RSEE…EEGR). Residues 1126–1135 (REEEEEMDDE) show a composition bias toward acidic residues.

This sequence belongs to the protein-tyrosine phosphatase family. Non-receptor class dual specificity subfamily.

It localises to the cytoplasm. It is found in the myofibril. Its subcellular location is the sarcomere. Its function is as follows. May be required for myofiber maturation. The protein is Serine/threonine/tyrosine-interacting-like protein 2 of Homo sapiens (Human).